The primary structure comprises 364 residues: 2-oxoadipate dioxygenase/decarboxylase, chloroplastic/amyloplastic (364 aa).

Residues 1–49 (MAVALAGARSPGAGAILSLRRLAPAAAAPVRLGGSGTPGTRRRRGIAMA) constitute a chloroplast transit peptide. Residues His107 and Arg111 each coordinate 2-oxoadipate. Residue His107 participates in Fe(2+) binding. A Fe(2+)-binding site is contributed by His243. 2 residues coordinate 2-oxoadipate: Gln289 and Tyr313. Residue Glu315 coordinates Fe(2+).

It belongs to the 2-oxoadipate dioxygenase/decarboxylase family. Fe(2+) serves as cofactor. In terms of tissue distribution, expressed in roots, stems, leaf sheaths, leaf blades, panicles, and endosperm.

The protein localises to the plastid. It localises to the chloroplast. It is found in the amyloplast. The enzyme catalyses 2-oxoadipate + O2 = (R)-2-hydroxyglutarate + CO2. It participates in amino-acid degradation. Catalyzes the decarboxylation and hydroxylation of 2-oxoadipate (2OA) to form D-2-hydroxyglutarate (D-2-HGA). Is involved in a D-lysine catabolic pathway. Involved in the regulation of starch synthesis and amyloplast development within the peripheral endosperm during the grain-filling stage. The chain is 2-oxoadipate dioxygenase/decarboxylase, chloroplastic/amyloplastic from Oryza sativa subsp. japonica (Rice).